A 195-amino-acid chain; its full sequence is HTH-type transcriptional regulator BetI (195 aa).

The HTH tetR-type domain maps to 8–68 (PIRRQQLIEA…ATMRYLISHL (61 aa)). Residues 31–50 (SIVQIARRAGVSNGIISHYF) constitute a DNA-binding region (H-T-H motif).

It participates in amine and polyamine biosynthesis; betaine biosynthesis via choline pathway [regulation]. Functionally, repressor involved in the biosynthesis of the osmoprotectant glycine betaine. It represses transcription of the choline transporter BetT and the genes of BetAB involved in the synthesis of glycine betaine. In Pectobacterium atrosepticum (strain SCRI 1043 / ATCC BAA-672) (Erwinia carotovora subsp. atroseptica), this protein is HTH-type transcriptional regulator BetI.